We begin with the raw amino-acid sequence, 263 residues long: Lens fiber major intrinsic protein (263 aa).

At 1-9 (MWEFRSFSF) the chain is on the cytoplasmic side. The chain crosses the membrane as a helical span at residues 10 to 29 (WRAVFAEFFGTMFYVFFGLG). Residues 30-41 (ASLKWAAGPANV) are Extracellular-facing. Residues 42–59 (LVIALAFGLVLATMVQSI) form a helical membrane-spanning segment. Residues 60-61 (GH) lie on the Cytoplasmic side of the membrane. The discontinuously helical intramembrane region spans 62-77 (VSGAHINPAVTFAFLI). Positions 68 to 70 (NPA) match the NPA 1 motif. The Cytoplasmic segment spans residues 78–82 (GSQMS). A helical membrane pass occupies residues 83 to 106 (LFRAIFYIAAQLLGAVAGAAVLYG). Over 107-127 (VTPAAIRGNLALNTLHPGVSL) the chain is Extracellular. The helical transmembrane segment at 128-148 (GQATTVEIFLTLQFVLCIFAT) threads the bilayer. Residues 149–156 (YDERRNGR) lie on the Cytoplasmic side of the membrane. A helical membrane pass occupies residues 157–175 (LGSVSLAIGFSLTLGHLFG). Topologically, residues 176–178 (LYY) are extracellular. The segment at residues 179-193 (TGASMNPARSFAPAV) is an intramembrane region (discontinuously helical). The NPA 2 motif lies at 184 to 186 (NPA). Topologically, residues 194–200 (LTRNFTN) are extracellular. The chain crosses the membrane as a helical span at residues 201–222 (HWVYWVGPIIGGALGGLVYDFI). Topologically, residues 223–263 (LFPRMRGLSERLSILKGARPAEPEGQQEATGEPIELKTQSL) are cytoplasmic. Residues 227-237 (MRGLSERLSIL) form an interaction with CALM region. The segment at 241-263 (RPAEPEGQQEATGEPIELKTQSL) is disordered.

Belongs to the MIP/aquaporin (TC 1.A.8) family. Homotetramer; each monomer provides an independent water pore. Two homotetramers on opposing membranes can dimerize, forming a cell-cell junction. Interacts with CALM; the calcium-calmodulin/CALM complex interacts with the cytoplasmic domains of two aquaporins, leading to channel closure.

The protein localises to the cell membrane. Its subcellular location is the cell junction. The catalysed reaction is H2O(in) = H2O(out). The water channel activity is inhibited by calcium through calmodulin/CALM. Aquaporins form homotetrameric transmembrane channels, with each monomer independently mediating water transport across the plasma membrane along its osmotic gradient. Specifically expressed in lens fiber cells, this aquaporin is crucial for maintaining lens water homeostasis and transparency. Beyond water permeability, it also acts as a cell-to-cell adhesion molecule, forming thin junctions between lens fiber cells that are essential for maintaining the ordered structure and transparency of the lens. This is Lens fiber major intrinsic protein from Lithobates pipiens (Northern leopard frog).